A 375-amino-acid polypeptide reads, in one-letter code: Venom allergen 5 (375 aa).

A signal peptide spans 1 to 26 (MSAPVGIPSLLLALCALLCVLNAVRS). In terms of domain architecture, SCP spans 66–210 (VRLHNNLRSK…RRYTQIVCNY (145 aa)). N-linked (GlcNAc...) asparagine glycans are attached at residues asparagine 300 and asparagine 366.

Belongs to the CRISP family. Venom allergen 5-like subfamily. Contains 9 disulfide bonds. Expressed by the venom gland.

The protein resides in the secreted. The chain is Venom allergen 5 from Lycosa singoriensis (Wolf spider).